The chain runs to 567 residues: Urease subunit alpha (567 aa).

The 439-residue stretch at 129 to 567 (GGIDTHIHWI…LPMAQRYFLF (439 aa)) folds into the Urease domain. Ni(2+)-binding residues include His134, His136, and Lys217. Lys217 is modified (N6-carboxylysine). His219 is a substrate binding site. Ni(2+)-binding residues include His246 and His272. His320 acts as the Proton donor in catalysis. Asp360 is a Ni(2+) binding site.

The protein belongs to the metallo-dependent hydrolases superfamily. Urease alpha subunit family. In terms of assembly, heterotrimer of UreA (gamma), UreB (beta) and UreC (alpha) subunits. Three heterotrimers associate to form the active enzyme. Ni cation serves as cofactor. In terms of processing, carboxylation allows a single lysine to coordinate two nickel ions.

The protein localises to the cytoplasm. The enzyme catalyses urea + 2 H2O + H(+) = hydrogencarbonate + 2 NH4(+). It functions in the pathway nitrogen metabolism; urea degradation; CO(2) and NH(3) from urea (urease route): step 1/1. The polypeptide is Urease subunit alpha (Enterobacter sp. (strain 638)).